Reading from the N-terminus, the 162-residue chain is 2-C-methyl-D-erythritol 2,4-cyclodiphosphate synthase (162 aa).

A divalent metal cation contacts are provided by D9 and H11. 4-CDP-2-C-methyl-D-erythritol 2-phosphate is bound by residues D9 to H11 and H37 to S38. An a divalent metal cation-binding site is contributed by H45. 4-CDP-2-C-methyl-D-erythritol 2-phosphate is bound by residues D59–G61, F64–D68, T135–E138, and R145.

It belongs to the IspF family. As to quaternary structure, homotrimer. It depends on a divalent metal cation as a cofactor.

It catalyses the reaction 4-CDP-2-C-methyl-D-erythritol 2-phosphate = 2-C-methyl-D-erythritol 2,4-cyclic diphosphate + CMP. Its pathway is isoprenoid biosynthesis; isopentenyl diphosphate biosynthesis via DXP pathway; isopentenyl diphosphate from 1-deoxy-D-xylulose 5-phosphate: step 4/6. Involved in the biosynthesis of isopentenyl diphosphate (IPP) and dimethylallyl diphosphate (DMAPP), two major building blocks of isoprenoid compounds. Catalyzes the conversion of 4-diphosphocytidyl-2-C-methyl-D-erythritol 2-phosphate (CDP-ME2P) to 2-C-methyl-D-erythritol 2,4-cyclodiphosphate (ME-CPP) with a corresponding release of cytidine 5-monophosphate (CMP). The chain is 2-C-methyl-D-erythritol 2,4-cyclodiphosphate synthase from Leptospira biflexa serovar Patoc (strain Patoc 1 / Ames).